Reading from the N-terminus, the 89-residue chain is Small ribosomal subunit protein bS20 (89 aa).

Residues 1-10 (MKNRSAIKRH) are compositionally biased toward basic residues. Positions 1–30 (MKNRSAIKRHNQSEVRRMRNRSAKSEVRTT) are disordered. Basic and acidic residues predominate over residues 11-30 (NQSEVRRMRNRSAKSEVRTT).

The protein belongs to the bacterial ribosomal protein bS20 family.

Functionally, binds directly to 16S ribosomal RNA. The sequence is that of Small ribosomal subunit protein bS20 from Treponema denticola (strain ATCC 35405 / DSM 14222 / CIP 103919 / JCM 8153 / KCTC 15104).